The chain runs to 186 residues: MIGPPVNLPKWLEENSHLLKPPINNYCVYNGDFTVMIVGGPNARTDYHINTTPEWFYQHRGAMTLKIVDPTEGNNTFRDIVIREGDMFLLPANTPHNPVRFADTVGIVLEQKRPAGSLDRMRWYCQREGCGAVVKEAAFHCTDLGTQIKEAVEAFKADEEGRRCKQCGEVAEWCPKPGSIRDPNLE.

Arg-44 serves as a coordination point for O2. Residues His-48, Glu-54, and His-96 each coordinate Fe cation. Glu-54 serves as a coordination point for substrate. 2 residues coordinate substrate: Arg-100 and Glu-110. The a divalent metal cation site is built by Cys-125, Cys-130, Cys-164, and Cys-167.

The protein belongs to the 3-HAO family. It depends on Fe(2+) as a cofactor.

Its subcellular location is the cytoplasm. The enzyme catalyses 3-hydroxyanthranilate + O2 = (2Z,4Z)-2-amino-3-carboxymuconate 6-semialdehyde. Its pathway is cofactor biosynthesis; NAD(+) biosynthesis; quinolinate from L-kynurenine: step 3/3. Its function is as follows. Catalyzes the oxidative ring opening of 3-hydroxyanthranilate to 2-amino-3-carboxymuconate semialdehyde, which spontaneously cyclizes to quinolinate. The polypeptide is 3-hydroxyanthranilate 3,4-dioxygenase (Chaetomium globosum (strain ATCC 6205 / CBS 148.51 / DSM 1962 / NBRC 6347 / NRRL 1970) (Soil fungus)).